Here is a 492-residue protein sequence, read N- to C-terminus: Endoglucanase 15 (492 aa).

An N-terminal signal peptide occupies residues 1-30 (MSCISSQCFITIKSICIVLLLSITCGAVSA). D86 functions as the Nucleophile in the catalytic mechanism. Residues H414, D466, and E475 contribute to the active site.

Belongs to the glycosyl hydrolase 9 (cellulase E) family.

Its subcellular location is the secreted. The enzyme catalyses Endohydrolysis of (1-&gt;4)-beta-D-glucosidic linkages in cellulose, lichenin and cereal beta-D-glucans.. This is Endoglucanase 15 from Arabidopsis thaliana (Mouse-ear cress).